The primary structure comprises 193 residues: Oocyte-secreted protein 3 (193 aa).

Positions 1-22 (MKDFVRLQSSFLLCTILTLSEQ) are cleaved as a signal peptide. N-linked (GlcNAc...) asparagine glycans are attached at residues asparagine 64, asparagine 130, asparagine 148, asparagine 151, asparagine 165, and asparagine 178.

This sequence belongs to the PLAC1 family.

Its subcellular location is the secreted. This is Oocyte-secreted protein 3 from Homo sapiens (Human).